A 373-amino-acid chain; its full sequence is Flagellar P-ring protein 1 (373 aa).

The N-terminal stretch at 1-25 (MKPINTFFSSFLLALTLGLPATSQA) is a signal peptide.

The protein belongs to the FlgI family. As to quaternary structure, the basal body constitutes a major portion of the flagellar organelle and consists of four rings (L,P,S, and M) mounted on a central rod.

It localises to the periplasm. The protein resides in the bacterial flagellum basal body. Assembles around the rod to form the L-ring and probably protects the motor/basal body from shearing forces during rotation. The sequence is that of Flagellar P-ring protein 1 from Vibrio parahaemolyticus serotype O3:K6 (strain RIMD 2210633).